A 252-amino-acid polypeptide reads, in one-letter code: Large ribosomal subunit protein uL30 (252 aa).

It belongs to the universal ribosomal protein uL30 family.

Binds to G-rich structures in 28S rRNA and in mRNAs. Plays a regulatory role in the translation apparatus; inhibits cell-free translation of mRNAs. In Drosophila melanogaster (Fruit fly), this protein is Large ribosomal subunit protein uL30 (RpL7).